A 267-amino-acid polypeptide reads, in one-letter code: 4-hydroxy-tetrahydrodipicolinate reductase (267 aa).

Residues 8–13 (GAAGRM) and D34 each bind NAD(+). Residue R35 participates in NADP(+) binding. NAD(+)-binding positions include 98–100 (GTT) and 122–125 (AANF). Catalysis depends on H155, which acts as the Proton donor/acceptor. H156 is a (S)-2,3,4,5-tetrahydrodipicolinate binding site. K159 serves as the catalytic Proton donor. 165 to 166 (GT) serves as a coordination point for (S)-2,3,4,5-tetrahydrodipicolinate.

Belongs to the DapB family.

The protein resides in the cytoplasm. It carries out the reaction (S)-2,3,4,5-tetrahydrodipicolinate + NAD(+) + H2O = (2S,4S)-4-hydroxy-2,3,4,5-tetrahydrodipicolinate + NADH + H(+). The catalysed reaction is (S)-2,3,4,5-tetrahydrodipicolinate + NADP(+) + H2O = (2S,4S)-4-hydroxy-2,3,4,5-tetrahydrodipicolinate + NADPH + H(+). It participates in amino-acid biosynthesis; L-lysine biosynthesis via DAP pathway; (S)-tetrahydrodipicolinate from L-aspartate: step 4/4. Catalyzes the conversion of 4-hydroxy-tetrahydrodipicolinate (HTPA) to tetrahydrodipicolinate. This Pseudomonas entomophila (strain L48) protein is 4-hydroxy-tetrahydrodipicolinate reductase.